The sequence spans 215 residues: Probable transaldolase (215 aa).

The Schiff-base intermediate with substrate role is filled by Lys83.

Belongs to the transaldolase family. Type 3B subfamily.

It is found in the cytoplasm. It catalyses the reaction D-sedoheptulose 7-phosphate + D-glyceraldehyde 3-phosphate = D-erythrose 4-phosphate + beta-D-fructose 6-phosphate. Its pathway is carbohydrate degradation; pentose phosphate pathway; D-glyceraldehyde 3-phosphate and beta-D-fructose 6-phosphate from D-ribose 5-phosphate and D-xylulose 5-phosphate (non-oxidative stage): step 2/3. Functionally, transaldolase is important for the balance of metabolites in the pentose-phosphate pathway. This Methanococcus vannielii (strain ATCC 35089 / DSM 1224 / JCM 13029 / OCM 148 / SB) protein is Probable transaldolase.